The primary structure comprises 327 residues: Undecaprenyl-phosphate 4-deoxy-4-formamido-L-arabinose transferase (327 aa).

Transmembrane regions (helical) follow at residues 235 to 255 (LLSL…VLLV) and 270 to 290 (VFTL…GMGL).

The protein belongs to the glycosyltransferase 2 family.

The protein localises to the cell inner membrane. It carries out the reaction UDP-4-deoxy-4-formamido-beta-L-arabinose + di-trans,octa-cis-undecaprenyl phosphate = 4-deoxy-4-formamido-alpha-L-arabinopyranosyl di-trans,octa-cis-undecaprenyl phosphate + UDP. Its pathway is glycolipid biosynthesis; 4-amino-4-deoxy-alpha-L-arabinose undecaprenyl phosphate biosynthesis; 4-amino-4-deoxy-alpha-L-arabinose undecaprenyl phosphate from UDP-4-deoxy-4-formamido-beta-L-arabinose and undecaprenyl phosphate: step 1/2. The protein operates within bacterial outer membrane biogenesis; lipopolysaccharide biosynthesis. Functionally, catalyzes the transfer of 4-deoxy-4-formamido-L-arabinose from UDP to undecaprenyl phosphate. The modified arabinose is attached to lipid A and is required for resistance to polymyxin and cationic antimicrobial peptides. The chain is Undecaprenyl-phosphate 4-deoxy-4-formamido-L-arabinose transferase from Yersinia pseudotuberculosis serotype IB (strain PB1/+).